The sequence spans 293 residues: Cytidine deaminase (293 aa).

2 consecutive CMP/dCMP-type deaminase domains span residues 47–166 (EDRA…FGPA) and 186–293 (ESED…YQAV). 88–90 (NME) serves as a coordination point for substrate. Residue His-101 coordinates Zn(2+). Glu-103 serves as the catalytic Proton donor. Cys-128 and Cys-131 together coordinate Zn(2+).

It belongs to the cytidine and deoxycytidylate deaminase family. In terms of assembly, homodimer. Zn(2+) serves as cofactor.

The catalysed reaction is cytidine + H2O + H(+) = uridine + NH4(+). The enzyme catalyses 2'-deoxycytidine + H2O + H(+) = 2'-deoxyuridine + NH4(+). Functionally, this enzyme scavenges exogenous and endogenous cytidine and 2'-deoxycytidine for UMP synthesis. The sequence is that of Cytidine deaminase from Aeromonas salmonicida (strain A449).